The chain runs to 441 residues: Xaa-Pro dipeptidase (441 aa).

Asp244, Asp255, His336, Glu381, and Glu420 together coordinate Mn(2+).

This sequence belongs to the peptidase M24B family. Bacterial-type prolidase subfamily. It depends on Mn(2+) as a cofactor.

It catalyses the reaction Xaa-L-Pro dipeptide + H2O = an L-alpha-amino acid + L-proline. Functionally, splits dipeptides with a prolyl residue in the C-terminal position. The polypeptide is Xaa-Pro dipeptidase (Xanthomonas euvesicatoria pv. vesicatoria (strain 85-10) (Xanthomonas campestris pv. vesicatoria)).